We begin with the raw amino-acid sequence, 102 residues long: NADH-quinone oxidoreductase subunit K 1 (102 aa).

3 helical membrane-spanning segments follow: residues 5–25, 30–50, and 62–82; these read LYEVLILASILFAMGLACVVA, VIMMLIGIEIMLNAVMLTFVG, and VFSLMIMALTSAEVSLALAMV.

This sequence belongs to the complex I subunit 4L family. In terms of assembly, NDH-1 is composed of 14 different subunits. Subunits NuoA, H, J, K, L, M, N constitute the membrane sector of the complex.

The protein resides in the cell inner membrane. It carries out the reaction a quinone + NADH + 5 H(+)(in) = a quinol + NAD(+) + 4 H(+)(out). NDH-1 shuttles electrons from NADH, via FMN and iron-sulfur (Fe-S) centers, to quinones in the respiratory chain. The immediate electron acceptor for the enzyme in this species is believed to be ubiquinone. Couples the redox reaction to proton translocation (for every two electrons transferred, four hydrogen ions are translocated across the cytoplasmic membrane), and thus conserves the redox energy in a proton gradient. This chain is NADH-quinone oxidoreductase subunit K 1, found in Citrifermentans bemidjiense (strain ATCC BAA-1014 / DSM 16622 / JCM 12645 / Bem) (Geobacter bemidjiensis).